We begin with the raw amino-acid sequence, 520 residues long: GMP synthase [glutamine-hydrolyzing] (520 aa).

A Glutamine amidotransferase type-1 domain is found at 9 to 202; sequence TILIIDFGSQ…VHRIVGVKPG (194 aa). Cys-86 acts as the Nucleophile in catalysis. Catalysis depends on residues His-176 and Glu-178. The GMPS ATP-PPase domain occupies 203–395; that stretch reads WTMGAYREQA…LGLPDSFIGR (193 aa). 230–236 contributes to the ATP binding site; it reads SGGVDSS.

As to quaternary structure, homodimer.

It carries out the reaction XMP + L-glutamine + ATP + H2O = GMP + L-glutamate + AMP + diphosphate + 2 H(+). The protein operates within purine metabolism; GMP biosynthesis; GMP from XMP (L-Gln route): step 1/1. Its function is as follows. Catalyzes the synthesis of GMP from XMP. The polypeptide is GMP synthase [glutamine-hydrolyzing] (Brucella melitensis biotype 2 (strain ATCC 23457)).